Consider the following 482-residue polypeptide: MDELVHDLASALEQTSEQNKLGELWEEMALSPRQQRRQLRKRRGRKRRSDFTHLAEHTCCYSEASESSLDEATKDCREVAPVTNFSDSDDTMVAKRHPALNAIVKSKQHSWHESDSFTENAPCRPLRRRRKVKRVTSEVAASLQQKLKVSDWSYERGCRFKSAKKQRLSRWKENTPWTSSGHGLCESAENRTFLSKTGRKERMECETDEQKQGSDENMSECETSSVCSSSDTGLFTNDEGRQGDDEQSDWFYEGECVPGFTVPNLLPKWAPDHCSEVERMDSGLDKFSDSTFLLPSRPAQRGYHTRLNRLPGAAARCLRKGRRRLVGKETSINTLGTERISHIISDPRQKEKNKALASDFPHISACAHEFNPLSPLYSLDVLADASHRRCSPAHCSARQANVHWGPPCSRDIKRKRKPVATASLSSPSAVHMDAVEPTTPASQAPKSPSSEWLVRTSAAEKATDATTATFFKMPQEKSPGYS.

Ser-31, Ser-86, and Ser-88 each carry phosphoserine. Thr-91 is modified (phosphothreonine). Lys-196 participates in a covalent cross-link: Glycyl lysine isopeptide (Lys-Gly) (interchain with G-Cter in SUMO2). Over residues 198-214 (GRKERMECETDEQKQGS) the composition is skewed to basic and acidic residues. 2 disordered regions span residues 198–247 (GRKE…DDEQ) and 413–482 (KRKR…PGYS). Residues 220–230 (ECETSSVCSSS) are compositionally biased toward low complexity. A compositionally biased stretch (polar residues) spans 439 to 450 (TPASQAPKSPSS). Ser-447 and Ser-449 each carry phosphoserine. Over residues 456–469 (TSAAEKATDATTAT) the composition is skewed to low complexity.

The chain is G patch domain-containing protein 2-like (GPATCH2L) from Homo sapiens (Human).